The chain runs to 159 residues: 2-C-methyl-D-erythritol 2,4-cyclodiphosphate synthase (159 aa).

Asp-8 and His-10 together coordinate a divalent metal cation. 4-CDP-2-C-methyl-D-erythritol 2-phosphate-binding positions include 8–10 and 34–35; these read DVH and HS. An a divalent metal cation-binding site is contributed by His-42. 4-CDP-2-C-methyl-D-erythritol 2-phosphate is bound by residues 56-58, 61-65, 100-106, 132-135, Phe-139, and Arg-142; these read DIG, FPDTD, AQAPKML, and TTTE.

Belongs to the IspF family. As to quaternary structure, homotrimer. A divalent metal cation is required as a cofactor.

It catalyses the reaction 4-CDP-2-C-methyl-D-erythritol 2-phosphate = 2-C-methyl-D-erythritol 2,4-cyclic diphosphate + CMP. It functions in the pathway isoprenoid biosynthesis; isopentenyl diphosphate biosynthesis via DXP pathway; isopentenyl diphosphate from 1-deoxy-D-xylulose 5-phosphate: step 4/6. Functionally, involved in the biosynthesis of isopentenyl diphosphate (IPP) and dimethylallyl diphosphate (DMAPP), two major building blocks of isoprenoid compounds. Catalyzes the conversion of 4-diphosphocytidyl-2-C-methyl-D-erythritol 2-phosphate (CDP-ME2P) to 2-C-methyl-D-erythritol 2,4-cyclodiphosphate (ME-CPP) with a corresponding release of cytidine 5-monophosphate (CMP). This Klebsiella pneumoniae (strain 342) protein is 2-C-methyl-D-erythritol 2,4-cyclodiphosphate synthase.